Consider the following 149-residue polypeptide: Transthyretin (149 aa).

The first 20 residues, 1-20 (MAFHSLLLLCLAGLLFVSEA), serve as a signal peptide directing secretion. At Cys-32 the chain carries Sulfocysteine. Residue Lys-37 coordinates L-thyroxine. A 4-carboxyglutamate modification is found at Glu-64. The L-thyroxine site is built by Glu-76 and Ser-139.

The protein belongs to the transthyretin family. Homotetramer. Dimer of dimers. In the homotetramer, subunits assemble around a central channel that can accommodate two ligand molecules. Interacts with RBP4. In terms of processing, sulfonation of the reactive cysteine Cys-32 enhances the stability of the native conformation of TTR, avoiding misassembly of the protein leading to amyloid formation. As to expression, detected in plasma (at protein level). Detected in liver.

It is found in the secreted. Functionally, thyroid hormone-binding protein. Probably transports thyroxine from the bloodstream to the brain. This Petaurus breviceps (Australian sugar glider) protein is Transthyretin (TTR).